The primary structure comprises 170 residues: Small ribosomal subunit protein uS4 (170 aa).

An S4 RNA-binding domain is found at 100–164; the sequence is RRLQTVVYRE…SDLTDELHPA (65 aa).

Belongs to the universal ribosomal protein uS4 family. Part of the 30S ribosomal subunit. Contacts protein S5. The interaction surface between S4 and S5 is involved in control of translational fidelity.

Its function is as follows. One of the primary rRNA binding proteins, it binds directly to 16S rRNA where it nucleates assembly of the body of the 30S subunit. In terms of biological role, with S5 and S12 plays an important role in translational accuracy. This is Small ribosomal subunit protein uS4 from Halobacterium salinarum (strain ATCC 29341 / DSM 671 / R1).